The chain runs to 622 residues: Probable E3 ubiquitin-protein ligase DTX2 (622 aa).

2 consecutive WWE domains span residues 8-97 and 98-174; these read SLVQ…AVRR and HLFP…SVRR. Residues Arg-213, Arg-215, and Arg-233 each carry the asymmetric dimethylarginine modification. N6-acetyllysine is present on Lys-249. Disordered stretches follow at residues 249–324 and 355–393; these read KPSL…VPMQ and APQP…EPEP. Omega-N-methylarginine is present on Arg-256. The segment covering 274–285 has biased composition (polar residues); that stretch reads LGSQPLYRSSLS. Over residues 299–322 the composition is skewed to low complexity; that stretch reads SGAVSASLPSGPSSSPGSVPATVP. Residue Ser-360 is modified to Phosphoserine. The span at 372–381 shows a compositional bias: basic residues; it reads GSVKRLRKMS. The RING-type zinc finger occupies 412–473; sequence CIICMEKLST…DGSLQCPSCK (62 aa).

This sequence belongs to the Deltex family. As to quaternary structure, homodimer. May form a heterodimer with other members of the Deltex family. Interacts with NOTCH1.

It localises to the cytoplasm. The protein resides in the nucleus. It carries out the reaction S-ubiquitinyl-[E2 ubiquitin-conjugating enzyme]-L-cysteine + [acceptor protein]-L-lysine = [E2 ubiquitin-conjugating enzyme]-L-cysteine + N(6)-ubiquitinyl-[acceptor protein]-L-lysine.. It functions in the pathway protein modification; protein ubiquitination. In terms of biological role, regulator of Notch signaling, a signaling pathway involved in cell-cell communications that regulates a broad spectrum of cell-fate determinations. Probably acts both as a positive and negative regulator of Notch, depending on the developmental and cell context. Mediates the antineural activity of Notch, possibly by inhibiting the transcriptional activation mediated by MATCH1. Functions as a ubiquitin ligase protein in vitro, suggesting that it may regulate the Notch pathway via some ubiquitin ligase activity. This Homo sapiens (Human) protein is Probable E3 ubiquitin-protein ligase DTX2 (DTX2).